We begin with the raw amino-acid sequence, 427 residues long: Tyrosine--tRNA ligase (427 aa).

Tyr-33 serves as a coordination point for L-tyrosine. The 'HIGH' region signature appears at 38–47 (PTASSLTIGN). 2 residues coordinate L-tyrosine: Tyr-168 and Gln-172. Positions 228 to 232 (KFGKS) match the 'KMSKS' region motif. Lys-231 lines the ATP pocket. An S4 RNA-binding domain is found at 361–427 (LDLLSTLTNS…KKNYYLLRFN (67 aa)).

This sequence belongs to the class-I aminoacyl-tRNA synthetase family. TyrS type 1 subfamily. In terms of assembly, homodimer.

It localises to the cytoplasm. The catalysed reaction is tRNA(Tyr) + L-tyrosine + ATP = L-tyrosyl-tRNA(Tyr) + AMP + diphosphate + H(+). Catalyzes the attachment of tyrosine to tRNA(Tyr) in a two-step reaction: tyrosine is first activated by ATP to form Tyr-AMP and then transferred to the acceptor end of tRNA(Tyr). This is Tyrosine--tRNA ligase from Cytophaga hutchinsonii (strain ATCC 33406 / DSM 1761 / CIP 103989 / NBRC 15051 / NCIMB 9469 / D465).